The sequence spans 310 residues: Homoserine kinase (310 aa).

Residue Pro91–Cys101 coordinates ATP.

Belongs to the GHMP kinase family. Homoserine kinase subfamily.

It is found in the cytoplasm. The catalysed reaction is L-homoserine + ATP = O-phospho-L-homoserine + ADP + H(+). The protein operates within amino-acid biosynthesis; L-threonine biosynthesis; L-threonine from L-aspartate: step 4/5. Its function is as follows. Catalyzes the ATP-dependent phosphorylation of L-homoserine to L-homoserine phosphate. This chain is Homoserine kinase, found in Escherichia coli O81 (strain ED1a).